We begin with the raw amino-acid sequence, 451 residues long: Trigger factor (451 aa).

In terms of domain architecture, PPIase FKBP-type spans 170–256; sequence DHIATIDYCE…LTALKYKDLP (87 aa).

Belongs to the FKBP-type PPIase family. Tig subfamily.

The protein localises to the cytoplasm. It carries out the reaction [protein]-peptidylproline (omega=180) = [protein]-peptidylproline (omega=0). Involved in protein export. Acts as a chaperone by maintaining the newly synthesized protein in an open conformation. Functions as a peptidyl-prolyl cis-trans isomerase. The polypeptide is Trigger factor (Treponema denticola (strain ATCC 35405 / DSM 14222 / CIP 103919 / JCM 8153 / KCTC 15104)).